Here is a 295-residue protein sequence, read N- to C-terminus: Protoheme IX farnesyltransferase (295 aa).

Transmembrane regions (helical) follow at residues 43 to 63, 92 to 112, 114 to 134, 140 to 160, 166 to 186, 231 to 251, and 272 to 292; these read PIQL…VAAL, SAFV…YALV, PLAA…YTPA, WSTE…WSAG, ALGW…FMAV, LLWG…GLWF, and FFAS…DRLF.

The protein belongs to the UbiA prenyltransferase family. Protoheme IX farnesyltransferase subfamily.

Its subcellular location is the cell inner membrane. It carries out the reaction heme b + (2E,6E)-farnesyl diphosphate + H2O = Fe(II)-heme o + diphosphate. The protein operates within porphyrin-containing compound metabolism; heme O biosynthesis; heme O from protoheme: step 1/1. Converts heme B (protoheme IX) to heme O by substitution of the vinyl group on carbon 2 of heme B porphyrin ring with a hydroxyethyl farnesyl side group. The chain is Protoheme IX farnesyltransferase from Opitutus terrae (strain DSM 11246 / JCM 15787 / PB90-1).